The chain runs to 210 residues: Resolvase (210 aa).

In terms of domain architecture, Resolvase/invertase-type recombinase catalytic spans 6–150 (VARVYLRVSS…EDRRERQRQG (145 aa)). S14 acts as the O-(5'-phospho-DNA)-serine intermediate in catalysis. A DNA-binding region (H-T-H motif) is located at residues 191-210 (GVSVSQVKRVWAQNQTKDKV).

Belongs to the site-specific recombinase resolvase family.

Its function is as follows. Site-specific recombination protein. The chain is Resolvase (stbA) from Pseudomonas syringae pv. tomato.